Reading from the N-terminus, the 972-residue chain is uncharacterized protein (972 aa).

The N-terminal stretch at 1–21 (MTNMILLSAVFLSLAILETHC) is a signal peptide. The Extracellular segment spans residues 22–932 (ANHISTGIST…KELGEKLYHV (911 aa)). A disordered region spans residues 892–912 (EPTVTTTTESPPPPTTTTRQI). A helical transmembrane segment spans residues 933-953 (LFFMGVLTVSVAGGVIILSFI). Over 954-972 (GCLIMRKMEDAPQKTKYSV) the chain is Cytoplasmic.

The protein localises to the host membrane. This is an uncharacterized protein from Magallana gigas (Pacific oyster).